The following is a 320-amino-acid chain: UDP-3-O-acyl-N-acetylglucosamine deacetylase (320 aa).

Zn(2+)-binding residues include histidine 92, histidine 251, and aspartate 255. Residue histidine 278 is the Proton donor of the active site.

The protein belongs to the LpxC family. The cofactor is Zn(2+).

The enzyme catalyses a UDP-3-O-[(3R)-3-hydroxyacyl]-N-acetyl-alpha-D-glucosamine + H2O = a UDP-3-O-[(3R)-3-hydroxyacyl]-alpha-D-glucosamine + acetate. It functions in the pathway glycolipid biosynthesis; lipid IV(A) biosynthesis; lipid IV(A) from (3R)-3-hydroxytetradecanoyl-[acyl-carrier-protein] and UDP-N-acetyl-alpha-D-glucosamine: step 2/6. Functionally, catalyzes the hydrolysis of UDP-3-O-myristoyl-N-acetylglucosamine to form UDP-3-O-myristoylglucosamine and acetate, the committed step in lipid A biosynthesis. The protein is UDP-3-O-acyl-N-acetylglucosamine deacetylase of Psychrobacter cryohalolentis (strain ATCC BAA-1226 / DSM 17306 / VKM B-2378 / K5).